Here is a 237-residue protein sequence, read N- to C-terminus: DNA repair protein RecO (237 aa).

It belongs to the RecO family.

In terms of biological role, involved in DNA repair and RecF pathway recombination. The sequence is that of DNA repair protein RecO from Rickettsia africae (strain ESF-5).